A 313-amino-acid polypeptide reads, in one-letter code: Sideroflexin-4 (313 aa).

5 consecutive transmembrane segments (helical) span residues 87-107 (AALLPFTAPTLFLSMLPVKSL), 141-161 (LLLGAGVIVSSTFLGLFPRLL), 175-191 (FIPVIILAQLSGMNVIA), 230-247 (VVLFGTSAFIPEVFAYFF), and 269-289 (VLVMGLMVPVSFSVFPQIGRI).

The protein belongs to the sideroflexin family.

Its subcellular location is the mitochondrion inner membrane. Its function is as follows. Mitochondrial amino-acid transporter. Does not act as a serine transporter: not able to mediate transport of serine into mitochondria. This chain is Sideroflexin-4, found in Bos taurus (Bovine).